We begin with the raw amino-acid sequence, 343 residues long: N-acetyl-gamma-glutamyl-phosphate reductase (343 aa).

Residue cysteine 147 is part of the active site.

Belongs to the NAGSA dehydrogenase family. Type 1 subfamily.

It is found in the cytoplasm. The enzyme catalyses N-acetyl-L-glutamate 5-semialdehyde + phosphate + NADP(+) = N-acetyl-L-glutamyl 5-phosphate + NADPH + H(+). It participates in amino-acid biosynthesis; L-arginine biosynthesis; N(2)-acetyl-L-ornithine from L-glutamate: step 3/4. Its function is as follows. Catalyzes the NADPH-dependent reduction of N-acetyl-5-glutamyl phosphate to yield N-acetyl-L-glutamate 5-semialdehyde. The protein is N-acetyl-gamma-glutamyl-phosphate reductase of Staphylococcus aureus (strain Mu3 / ATCC 700698).